We begin with the raw amino-acid sequence, 87 residues long: Beta-toxin CsE3 (87 aa).

The first 19 residues, 1-19, serve as a signal peptide directing secretion; sequence MNSLLIIAACLALIGTVWA. The region spanning 20-85 is the LCN-type CS-alpha/beta domain; the sequence is KEGYIVNYHT…VWPLPKKKCN (66 aa). Intrachain disulfides connect Cys31–Cys84, Cys35–Cys60, Cys44–Cys65, and Cys48–Cys67. Asn85 is subject to Asparagine amide.

It belongs to the long (4 C-C) scorpion toxin superfamily. Sodium channel inhibitor family. Beta subfamily. As to expression, expressed by the venom gland.

It is found in the secreted. Its function is as follows. Beta toxins bind voltage-independently at site-4 of sodium channels (Nav) and shift the voltage of activation toward more negative potentials thereby affecting sodium channel activation and promoting spontaneous and repetitive firing. The polypeptide is Beta-toxin CsE3 (Centruroides sculpturatus (Arizona bark scorpion)).